The chain runs to 329 residues: Stimulator of interferon genes protein (329 aa).

The Cytoplasmic segment spans residues 1–4 (MACV). A helical membrane pass occupies residues 5–25 (LAIGSILFVWILGKGKYSGAQ). Leu-26 is a topological domain (lumenal). Residues 27–52 (IYRMATNFAISQGCCLVTCACELTEE) traverse the membrane as a helical segment. The Cytoplasmic portion of the chain corresponds to 53 to 74 (IKHLHTRYNGHYWRALKASFNL). Residues 75–88 (SCAAFVTAILCYVF) traverse the membrane as a helical segment. Residues 89-98 (YEPKLMASLP) are Lumenal-facing. Residues 99-116 (LTIDITLTLLSWLFCWIL) form a helical membrane-spanning segment. Over 117-329 (GIQGPTPATI…QQHSEEYSML (213 aa)) the chain is Cytoplasmic. The cyclic dinucleotide-binding domain (CBD) stretch occupies residues 135–325 (LNVAHGLAWS…KHIRQQHSEE (191 aa)). Positions 144, 149, 220, and 245 each coordinate 2',3'-cGAMP. 3',3'-c-di-GMP-binding positions include Ser-144, Tyr-149, 220 to 223 (RVFK), and Thr-245.

This sequence belongs to the STING family. In terms of assembly, homodimer; forms a homodimer in absence of cyclic nucleotide (c-di-GMP or cGAMP). Homotetramer; in presence of cyclic nucleotide (c-di-GMP or cGAMP), forms tetramers and higher-order oligomers through side-by-side packing.

It localises to the endoplasmic reticulum membrane. The protein resides in the cytoplasm. It is found in the perinuclear region. The protein localises to the endoplasmic reticulum-Golgi intermediate compartment membrane. Its subcellular location is the golgi apparatus membrane. It localises to the cytoplasmic vesicle. The protein resides in the autophagosome membrane. The enzyme catalyses H(+)(in) = H(+)(out). In terms of biological role, sensor of cytosolic DNA from bacteria and viruses that promotes autophagy. Acts by recognizing and binding cyclic GMP-AMP (cGAMP), a messenger produced by CGAS in response to DNA in the cytosol. Exhibits guanine base-specific ligand recognition: binds 3'-3'linked cGAMP, 2'-3' linked cGAMP and 3'-3' linked c-di-GMP with much greater affinity as compared to 3'-3' linked c-di-AMP. Following cGAMP-binding, promotes the formation of autophagosomes, leading to target cytosolic DNA for degradation by the lysosome. Promotes autophagy by acting as a proton channel that directs proton efflux from the Golgi to facilitate LC3 lipidation. Lacks the C-terminal tail (CTT) found in other vertebrate orthologs which is essential for interferon signaling. The protein is Stimulator of interferon genes protein of Xenopus tropicalis (Western clawed frog).